The sequence spans 378 residues: Spermidine/putrescine import ATP-binding protein PotA (378 aa).

In terms of domain architecture, ABC transporter spans 18–248; that stretch reads VQLAGIRKCF…PKNLFVTGFI (231 aa). 50–57 provides a ligand contact to ATP; that stretch reads GPSGCGKT.

Belongs to the ABC transporter superfamily. Spermidine/putrescine importer (TC 3.A.1.11.1) family. The complex is composed of two ATP-binding proteins (PotA), two transmembrane proteins (PotB and PotC) and a solute-binding protein (PotD).

Its subcellular location is the cell inner membrane. The catalysed reaction is ATP + H2O + polyamine-[polyamine-binding protein]Side 1 = ADP + phosphate + polyamineSide 2 + [polyamine-binding protein]Side 1.. Its function is as follows. Part of the ABC transporter complex PotABCD involved in spermidine/putrescine import. Responsible for energy coupling to the transport system. The polypeptide is Spermidine/putrescine import ATP-binding protein PotA (Shigella flexneri serotype 5b (strain 8401)).